A 340-amino-acid polypeptide reads, in one-letter code: Cytochrome c oxidase subunit 1 (340 aa).

The chain crosses the membrane as a helical span at residues 18–38 (MCYLLVAILCGFLGYIYSLFI). Positions 41 and 46 each coordinate Ca(2+). The chain crosses the membrane as a helical span at residues 42–62 (LSIIGCGVLFGDYQYYNVLVT). H64 lines the Fe(II)-heme a pocket. A run of 7 helical transmembrane segments spans residues 66-86 (LVMV…NYFV), 100-120 (LNNM…SGLL), 148-168 (FTVF…INLL), 186-206 (LFIW…PVLA), 237-257 (LFWF…FGLI), 279-299 (MILI…VVGM), and 305-325 (AYFG…LFNW). Residue H243 participates in Cu cation binding. The 1'-histidyl-3'-tyrosine (His-Tyr) cross-link spans 243–247 (HPEVY). Residue Y247 coordinates O2. Residues H292 and H293 each contribute to the Cu cation site.

This sequence belongs to the heme-copper respiratory oxidase family. In terms of assembly, component of the cytochrome c oxidase (complex IV, CIV), a multisubunit enzyme composed of a catalytic core of 3 subunits and several supernumerary subunits. The complex exists as a monomer or a dimer and forms supercomplexes (SCs) in the inner mitochondrial membrane with ubiquinol-cytochrome c oxidoreductase (cytochrome b-c1 complex, complex III, CIII). Heme serves as cofactor. Cu cation is required as a cofactor.

It is found in the mitochondrion inner membrane. It catalyses the reaction 4 Fe(II)-[cytochrome c] + O2 + 8 H(+)(in) = 4 Fe(III)-[cytochrome c] + 2 H2O + 4 H(+)(out). Its pathway is energy metabolism; oxidative phosphorylation. In terms of biological role, component of the cytochrome c oxidase, the last enzyme in the mitochondrial electron transport chain which drives oxidative phosphorylation. The respiratory chain contains 3 multisubunit complexes succinate dehydrogenase (complex II, CII), ubiquinol-cytochrome c oxidoreductase (cytochrome b-c1 complex, complex III, CIII) and cytochrome c oxidase (complex IV, CIV), that cooperate to transfer electrons derived from NADH and succinate to molecular oxygen, creating an electrochemical gradient over the inner membrane that drives transmembrane transport and the ATP synthase. Cytochrome c oxidase is the component of the respiratory chain that catalyzes the reduction of oxygen to water. Electrons originating from reduced cytochrome c in the intermembrane space (IMS) are transferred via the dinuclear copper A center (CU(A)) of subunit 2 and heme A of subunit 1 to the active site in subunit 1, a binuclear center (BNC) formed by heme A3 and copper B (CU(B)). The BNC reduces molecular oxygen to 2 water molecules using 4 electrons from cytochrome c in the IMS and 4 protons from the mitochondrial matrix. This chain is Cytochrome c oxidase subunit 1 (COI), found in Strigomonas oncopelti (Parasitic flagellate).